A 327-amino-acid polypeptide reads, in one-letter code: uncharacterized protein (327 aa).

A helical transmembrane segment spans residues 13–33 (IICIISIIVLLLIIISLYPHK).

The protein resides in the membrane. This is an uncharacterized protein from Caenorhabditis elegans.